A 316-amino-acid chain; its full sequence is Nucleotide-binding protein NFA_35930 (316 aa).

32 to 39 (GLSGAGRG) serves as a coordination point for ATP. 83-86 (DVRS) provides a ligand contact to GTP.

Belongs to the RapZ-like family.

In terms of biological role, displays ATPase and GTPase activities. The chain is Nucleotide-binding protein NFA_35930 from Nocardia farcinica (strain IFM 10152).